The chain runs to 287 residues: Protease HtpX (287 aa).

Helical transmembrane passes span 4 to 24 and 33 to 53; these read IFLL…VMSI and GGLL…SLAI. His-139 serves as a coordination point for Zn(2+). Glu-140 is a catalytic residue. His-143 lines the Zn(2+) pocket. The next 2 membrane-spanning stretches (helical) occupy residues 154 to 174 and 195 to 215; these read LIQG…AGII and AVVF…VAYF. Residue Glu-220 coordinates Zn(2+).

The protein belongs to the peptidase M48B family. The cofactor is Zn(2+).

The protein localises to the cell inner membrane. The polypeptide is Protease HtpX (Shewanella halifaxensis (strain HAW-EB4)).